Here is an 86-residue protein sequence, read N- to C-terminus: Myosuppressin (86 aa).

The first 18 residues, 1 to 18 (MAIFCNNVLAALPTQCNP), serve as a signal peptide directing secretion. Positions 19–70 (GFLDDLPPRIRKVCVALSRIYELGSEMESYIGDKENHITGFHESIPLLDSGV) are excised as a propeptide. Q73 bears the Pyrrolidone carboxylic acid mark. F82 carries the post-translational modification Phenylalanine amide.

The protein localises to the secreted. In terms of biological role, myoinhibiting neuropeptide. The sequence is that of Myosuppressin from Apis mellifera (Honeybee).